Consider the following 1031-residue polypeptide: MLPVILIACLAQLVLAQADLKDLDGPNICKRRELYNVDVVYTELQSFQERGSTWCVTFPPRCSTYRIKHRVVNKTKTIAKNRIVRDCCDGYIASAGECVPHCSEPCQHGRCISPEKCKCDHGYGGPACDINCPPGWYGRNCSMQCDCLNNAVCEPFSGDCECAKGYTGARCADICPEGFFGANCSEKCRCENGGKCHHVSGECQCAPGFTGPLCDMRCPDGKHGAQCQQDCPCQNDGKCQPETGACMCNPGWTGDVCANKCPVGSYGPGCQESCECYKGAPCHHITGQCECPPGYRGERCFDECQLNTYGFNCSMTCDCANDAMCDRANGTCICNPGWTGAKCAERICEANKYGLDCNRTCECDMEHTDLCHPETGNCQCSIGWSSAQCTRPCTFLRYGPNCELTCNCKNGAKCSPVNGTCLCAPGWRGPTCEESCEPGTFGQDCALRCDCQNGAKCEPETGQCLCTAGWKNIKCDRPCDLNHFGQDCAKVCDCHNNAACNPQNGSCTCAAGWTGERCERKCDTGKFGHDCAQKCQCDFNNSLACDATNGRCVCKQDWGGVHCETNCRSGYYGENCDKVCRCLNNSSCDPDSGNCICSAGWTGADCAEPCPPGFYGMECKERCPEILHGNKSCDHITGEILCRTGYIGLTCEHPCPAGLYGPGCKLKCNCEHGGECNHVTGQCQCLPGWTGSNCNESCPTDTYGQGCAQRCRCVHHKVCRKADGMCICETGWSGTRCDEVCPEGFYGEHCMNTCACPSANFQCHAAHGCVCRSGYTGDNCDELIASQRIADQSENSSRASVALTLVLMTLFACIIFAVFIYYRRRVSNLKTEIAHVHYTHDTNPPSWPPNHNFDNPVYGMQAETRLLPNNMRSKMNNFDQRSTMSTDYGDDCNASGRVGSYSINYNHDLLTKNLNADRTNPIVYNESLKEEHVYDEIKHKEGYKDPDEYDHLDYSRPSTSQKPHYHRMNDAMLNINQDEEKPSNVKNMTVLLNKPLPPTEPEPQHECFDNTNTNLDNVSTASPSSSPKFLK.

A signal peptide spans 1–16; that stretch reads MLPVILIACLAQLVLA. The Extracellular portion of the chain corresponds to 17–800; sequence QADLKDLDGP…DQSENSSRAS (784 aa). The EMI domain occupies 25–100; sequence GPNICKRREL…YIASAGECVP (76 aa). 6 disulfides stabilise this stretch: Cys29-Cys88, Cys55-Cys62, Cys87-Cys98, Cys102-Cys111, Cys106-Cys117, and Cys119-Cys128. Asn73 is a glycosylation site (N-linked (GlcNAc...) asparagine). EGF-like domains lie at 99-129, 137-172, 180-215, 223-258, 266-301, and 309-344; these read VPHCSEPCQHGRCISPEKCKCDHGYGGPACD, YGRNCSMQCDCLNNAVCEPFSGDCECAKGYTGARCA, FGANCSEKCRCENGGKCHHVSGECQCAPGFTGPLCD, HGAQCQQDCPCQNDGKCQPETGACMCNPGWTGDVCA, YGPGCQESCECYKGAPCHHITGQCECPPGYRGERCF, and YGFNCSMTCDCANDAMCDRANGTCICNPGWTGAKCA. N-linked (GlcNAc...) asparagine glycosylation occurs at Asn140. Intrachain disulfides connect Cys141–Cys153, Cys147–Cys160, and Cys162–Cys171. N-linked (GlcNAc...) asparagine glycosylation is present at Asn183. Intrachain disulfides connect Cys184–Cys196, Cys190–Cys203, Cys205–Cys214, Cys227–Cys239, Cys233–Cys246, Cys248–Cys257, Cys270–Cys282, Cys276–Cys289, and Cys291–Cys300. Asn312 is a glycosylation site (N-linked (GlcNAc...) asparagine). 3 cysteine pairs are disulfide-bonded: Cys313/Cys325, Cys319/Cys332, and Cys334/Cys343. N-linked (GlcNAc...) asparagine glycosylation occurs at Asn329. N-linked (GlcNAc...) asparagine glycosylation is present at Asn358. 2 consecutive EGF-like domains span residues 398-433 and 484-519; these read YGPNCELTCNCKNGAKCSPVNGTCLCAPGWRGPTCE and FGQDCAKVCDCHNNAACNPQNGSCTCAAGWTGERCE. 6 disulfides stabilise this stretch: Cys402/Cys414, Cys408/Cys421, Cys423/Cys432, Cys488/Cys500, Cys494/Cys507, and Cys509/Cys518. N-linked (GlcNAc...) asparagine glycosylation is present at Asn418. N-linked (GlcNAc...) asparagine glycosylation occurs at Asn504. N-linked (GlcNAc...) asparagine glycosylation is found at Asn540, Asn584, and Asn585. Residues 572–607 form the EGF-like 9 domain; that stretch reads YGENCDKVCRCLNNSSCDPDSGNCICSAGWTGADCA. 3 cysteine pairs are disulfide-bonded: Cys576–Cys588, Cys582–Cys595, and Cys597–Cys606. The N-linked (GlcNAc...) asparagine glycan is linked to Asn630. The EGF-like 10 domain occupies 660–695; that stretch reads YGPGCKLKCNCEHGGECNHVTGQCQCLPGWTGSNCN. Cystine bridges form between Cys664/Cys676, Cys670/Cys683, and Cys685/Cys694. N-linked (GlcNAc...) asparagine glycosylation is found at Asn695 and Asn795. The helical transmembrane segment at 801 to 821 threads the bilayer; the sequence is VALTLVLMTLFACIIFAVFIY. Residues 822 to 1031 lie on the Cytoplasmic side of the membrane; sequence YRRRVSNLKT…SPSSSPKFLK (210 aa). Residues 940–954 show a composition bias toward basic and acidic residues; it reads KEGYKDPDEYDHLDY. 2 disordered regions span residues 940 to 964 and 989 to 1031; these read KEGYKDPDEYDHLDYSRPSTSQKPH and TVLL…KFLK. Positions 1009–1031 are enriched in polar residues; it reads DNTNTNLDNVSTASPSSSPKFLK.

Belongs to the MEGF family. Interacts (via the cytoplasmic domain) with shark; this is required for the recruitment of drpr and glial cells to severed axons and for the phagocytosis of axonal debris by glial cells following axon injury. Interacts with ced-6. In terms of assembly, interacts with csw; this results in dephosphorylation of drpr isoform A which is required for the inhibition of glial cell engulfment of axonal debris produced following axonal injury. Phosphorylated on tyrosine residues. Phosphorylation is induced by binding to prtp. It is also induced by binding to the membrane phospholipid phosphatidylserine. Phosphorylation may be mediated directly or indirectly by Src42a and is required for interaction with shark. Post-translationally, dephosphorylated by csw which is required for the inhibition of glial cell engulfment of axonal debris produced following axonal injury. In terms of tissue distribution, expressed in adult head (at protein level). Expressed in glia, macrophages and ectoderm (at protein level). Detected in glia around the mushroom body dorsal lobe and in glial processes infiltrating the medial lobe (at protein level). Expressed in adult brain glia including antennal lobe glia (at protein level). Expressed in the larval fat body (at protein level). Expressed in the ovary (at protein level). Isoform B: Predominant isoform in adult glia.

Its subcellular location is the cell membrane. The protein localises to the cell projection. It localises to the axon. The protein resides in the cytoplasm. It is found in the postsynaptic cell membrane. Its subcellular location is the cell cortex. The protein localises to the phagocytic cup. It localises to the cytoplasmic vesicle. The protein resides in the phagosome. Functionally, receptor which is involved in the phagocytosis of a variety of cells including apoptotic cells, severed and pruned axons, degenerating dendrites, salivary gland cells, germline cells and bacteria. Binds to the ligand prtp which relocates from the endoplasmic reticulum to the cell surface during apoptosis. Ligand-binding may promote tyrosine phosphorylation mediated by Src42a, interaction with shark and subsequent activation of phagocytosis. Also binds to the membrane phospholipid phosphatidylserine which is exposed on the surface of apoptotic cells. Required for the phagocytosis of apoptotic cells by macrophages. Also required for the phagocytosis of apoptotic neurons by glial cells in the embryonic nervous system. Acts downstream of NimC4/simu in the glial phagocytosis of apoptotic neurons. Plays a role in the glial engulfment of larval axons as part of programmed axon pruning during metamorphosis. Also mediates glial cell clearance of severed axons following axonal injury. Required for the engulfment of degenerating dendrites by epidermal cells. Required in the ovary for the engulfment and subsequent processing of dying germline cells by follicular epithelial cells through activation of the JNK/bsk pathway. Plays a role in neuromuscular junction development by mediating the clearance of presynaptic debris and immature boutons which are shed by growing synapses. Required for larval salivary gland cell death which occurs following a rise in steroid levels after puparium formation. Also involved in bacterial phagocytosis. Required for hemocyte phagocytosis of the Gram-positive bacterium S.aureus. Lipoteichoic acid, synthesized by the S.aureus lipoteichoic acid synthase ltaS, acts as a ligand for drpr in this process. Together with Src42a and shark, promotes the migration of macrophages to sites of wounding as part of a signaling cascade where Scr42a detects production of hydrogen peroxide at wound sites which triggers phosphorylation of drpr and subsequent recruitment and activation of shark. Also required for macrophage priming which occurs following phagocytosis of apoptotic cells and ensures that macrophages develop a form of molecular memory that allows them to later mount an inflammatory response to tissue damage and bacterial infection. Is also an essential factor in the regulation of muscle development and myogenesis, and as a consequence is required for normal locomotion. Likely to control the balance between skeletal muscle satellite cells proliferation and differentiation through regulation of the notch signaling pathway. In terms of biological role, promotes engulfment of axonal debris by glial cells following axonal injury. Its function is as follows. Potently inhibits glial cell engulfment of axonal debris produced following axonal injury. The protein is Protein draper of Drosophila melanogaster (Fruit fly).